The sequence spans 640 residues: Probable potassium transport system protein Kup 2 (640 aa).

A disordered region spans residues 1–20 (MTADIAATPAETPATNGHGD). The next 12 membrane-spanning stretches (helical) occupy residues 30–50 (LTLG…LYAL), 71–91 (VVSL…VVIL), 117–137 (ASII…DAVI), 155–175 (AAFD…LFAV), 183–203 (VAAF…IAAF), 224–244 (FMLH…LAVT), 265–285 (WLFV…ALVI), 294–314 (PFFL…ATVA), 363–383 (LLLV…ALAS), 385–405 (YGIS…VVIW), 410–430 (WSPI…LTFL), and 437–457 (VLEG…LMYT).

The protein belongs to the HAK/KUP transporter (TC 2.A.72) family.

Its subcellular location is the cell inner membrane. It catalyses the reaction K(+)(in) + H(+)(in) = K(+)(out) + H(+)(out). Transport of potassium into the cell. Likely operates as a K(+):H(+) symporter. The sequence is that of Probable potassium transport system protein Kup 2 from Bradyrhizobium sp. (strain ORS 278).